The chain runs to 896 residues: Protein translocase subunit SecA (896 aa).

ATP contacts are provided by residues glutamine 87, 105–109, and aspartate 507; that span reads GEGKT. Residues 855 to 879 form a disordered region; sequence LSENDEASETQTFRRQEKKIGRNDP. The span at 866 to 876 shows a compositional bias: basic and acidic residues; that stretch reads TFRRQEKKIGR. Residues cysteine 880, cysteine 882, cysteine 891, and histidine 892 each coordinate Zn(2+).

This sequence belongs to the SecA family. As to quaternary structure, monomer and homodimer. Part of the essential Sec protein translocation apparatus which comprises SecA, SecYEG and auxiliary proteins SecDF-YajC and YidC. Zn(2+) serves as cofactor.

The protein resides in the cell inner membrane. The protein localises to the cytoplasm. The enzyme catalyses ATP + H2O + cellular proteinSide 1 = ADP + phosphate + cellular proteinSide 2.. Its function is as follows. Part of the Sec protein translocase complex. Interacts with the SecYEG preprotein conducting channel. Has a central role in coupling the hydrolysis of ATP to the transfer of proteins into and across the cell membrane, serving both as a receptor for the preprotein-SecB complex and as an ATP-driven molecular motor driving the stepwise translocation of polypeptide chains across the membrane. In Legionella pneumophila (strain Lens), this protein is Protein translocase subunit SecA.